The following is a 404-amino-acid chain: MKYNINVHSEIGQLQTVLVHTPGNEIRRISPRRLDDLLFSAVIEPDTAIQEHQTFCQLLQEQNIEVVQLTDLTATTFDKANATAQNQFIETWLDQAEPKLTPEHRKVAKQYLLEQKAKSTLSMVRSMMGGIDKRKVAAANTINGDFLVDPMPNLYFTRDPFASIGHGISINRMKYLTRRRETLFASFIFANHPIIAARKFYFKPIDMGTIEGGDIFVYDQQTVVMGLSERTTEAAINVLAKKIQQDSSTSFKRIFVINVPQLPNLMHLDTWLTMLDRNKFLYSPNMLAVLKAWRIDFTDPALKWNEIAGDLSTILHTIIGQKPMLIPIAGADANQTEIDIETHFDGTNYLTIAPSVVVGYARNKLTHQTLEAAGVKVIAFKGNQLSLGMGSARCMSMPLVRKPL.

The active-site Amidino-cysteine intermediate is the Cys394.

Belongs to the arginine deiminase family.

Its subcellular location is the cytoplasm. The enzyme catalyses L-arginine + H2O = L-citrulline + NH4(+). It functions in the pathway amino-acid degradation; L-arginine degradation via ADI pathway; carbamoyl phosphate from L-arginine: step 1/2. In Mycoplasma pneumoniae (strain ATCC 29342 / M129 / Subtype 1) (Mycoplasmoides pneumoniae), this protein is Putative arginine deiminase (arcA).